The following is a 92-amino-acid chain: Small ribosomal subunit protein uS19c (92 aa).

It belongs to the universal ribosomal protein uS19 family.

The protein resides in the plastid. The protein localises to the chloroplast. Protein S19 forms a complex with S13 that binds strongly to the 16S ribosomal RNA. The protein is Small ribosomal subunit protein uS19c (rps19) of Guillardia theta (Cryptophyte).